The sequence spans 529 residues: Probable serine/threonine protein phosphatase 2A regulatory subunit B''epsilon (529 aa).

Residues 60-110 (KSGTPTNKSKNLPSVFLSSSTPPLSPRSSSGSPRFSRQRTSPPSLHSPLRS) are disordered. Positions 71–109 (LPSVFLSSSTPPLSPRSSSGSPRFSRQRTSPPSLHSPLR) are enriched in low complexity. One can recognise an EF-hand domain in the interval 381–416 (SSEPSLEYWFKCVDLDGNGVITSNEMQFFFEEQLHR). Ca(2+) is bound by residues Asp-394, Asp-396, Asn-398, and Glu-405. Positions 507–529 (EEDVDEVSNGSADVWDEPLEPPF) are disordered. The span at 520–529 (VWDEPLEPPF) shows a compositional bias: acidic residues.

As to quaternary structure, PP2A consists of a common heterodimeric core enzyme, composed of a 36 kDa catalytic subunit (subunit C) and a 65 kDa constant regulatory subunit (PR65 or subunit A), that associates with a variety of regulatory subunits. Proteins that associate with the core dimer include three families of regulatory subunits B (the R2/B/PR55/B55, R3/B''/PR72/PR130/PR59 and R5/B'/B56 families) and cell signaling molecules.

In terms of biological role, probable regulatory subunit of type 2A protein phosphatase. The sequence is that of Probable serine/threonine protein phosphatase 2A regulatory subunit B''epsilon (B''EPSILON) from Arabidopsis thaliana (Mouse-ear cress).